The following is a 561-amino-acid chain: Efflux pump bfoC (561 aa).

Positions 1–55 (MSDTARILGGPSASSSRDGGMELNSFTEVSQTNSRSHSTKEEEGQVDDQQRPARE) are disordered. Over residues 24–36 (NSFTEVSQTNSRS) the composition is skewed to polar residues. Positions 38–55 (STKEEEGQVDDQQRPARE) are enriched in basic and acidic residues. 13 helical membrane passes run 59–79 (GVLG…CIFC), 103–123 (DVGW…LTFG), 128–148 (FFPI…GSFI), 164–184 (VAGL…SQCV), 194–214 (GFIM…GGAF), 222–242 (WCFY…LFTF), 257–277 (AVGL…CLLL), 293–313 (VVAL…LQLW), 335–355 (LYGF…PIWF), 378–398 (VVFA…GPFM), 425–445 (IGYQ…PIFV), 457–477 (TATA…VSVA), and 530–550 (VHTF…ATVI).

The protein belongs to the major facilitator superfamily. TCR/Tet family.

Its subcellular location is the cell membrane. Functionally, efflux pump; part of the gene cluster that mediates the biosynthesis of bifonsecin B, a dimeric gamma-naphthopyrone. In Aspergillus brasiliensis (strain CBS 101740 / IMI 381727 / IBT 21946), this protein is Efflux pump bfoC.